The chain runs to 827 residues: Probable beta-glucosidase H (827 aa).

Residue Asp-223 is part of the active site. Positions 387–546 constitute a PA14 domain; it reads RLLTNAVMHF…DSAEMVRSAV (160 aa). Residues Asn-471, Asn-594, Asn-600, and Asn-625 are each glycosylated (N-linked (GlcNAc...) asparagine).

This sequence belongs to the glycosyl hydrolase 3 family.

It localises to the secreted. It carries out the reaction Hydrolysis of terminal, non-reducing beta-D-glucosyl residues with release of beta-D-glucose.. The protein operates within glycan metabolism; cellulose degradation. Its function is as follows. Beta-glucosidases are one of a number of cellulolytic enzymes involved in the degradation of cellulosic biomass. Catalyzes the last step releasing glucose from the inhibitory cellobiose. The chain is Probable beta-glucosidase H (bglH) from Aspergillus oryzae (strain ATCC 42149 / RIB 40) (Yellow koji mold).